A 461-amino-acid chain; its full sequence is UDP-N-acetylmuramoylalanine--D-glutamate ligase (461 aa).

Position 115–121 (115–121 (GSNGKTT)) interacts with ATP.

The protein belongs to the MurCDEF family.

The protein localises to the cytoplasm. It catalyses the reaction UDP-N-acetyl-alpha-D-muramoyl-L-alanine + D-glutamate + ATP = UDP-N-acetyl-alpha-D-muramoyl-L-alanyl-D-glutamate + ADP + phosphate + H(+). The protein operates within cell wall biogenesis; peptidoglycan biosynthesis. Its function is as follows. Cell wall formation. Catalyzes the addition of glutamate to the nucleotide precursor UDP-N-acetylmuramoyl-L-alanine (UMA). The protein is UDP-N-acetylmuramoylalanine--D-glutamate ligase of Acidobacterium capsulatum (strain ATCC 51196 / DSM 11244 / BCRC 80197 / JCM 7670 / NBRC 15755 / NCIMB 13165 / 161).